A 308-amino-acid chain; its full sequence is Probable peptidyl-prolyl cis-trans isomerase B (308 aa).

The segment at 74-123 is disordered; sequence DHQSTTSATPTDSASTSPPQAATAPPLPPFKPSANLGANCQYPPSPDKAV. Positions 77–97 are enriched in low complexity; that stretch reads STTSATPTDSASTSPPQAATA. The PPIase cyclophilin-type domain occupies 139–307; the sequence is AQVSVSMVTN…TEVTITSVLL (169 aa).

The protein belongs to the cyclophilin-type PPIase family.

It carries out the reaction [protein]-peptidylproline (omega=180) = [protein]-peptidylproline (omega=0). PPIases accelerate the folding of proteins. It catalyzes the cis-trans isomerization of proline imidic peptide bonds in oligopeptides. The sequence is that of Probable peptidyl-prolyl cis-trans isomerase B (ppiB) from Mycobacterium tuberculosis (strain CDC 1551 / Oshkosh).